A 223-amino-acid polypeptide reads, in one-letter code: Probable transaldolase (223 aa).

The Schiff-base intermediate with substrate role is filled by K92.

The protein belongs to the transaldolase family. Type 3B subfamily.

The protein resides in the cytoplasm. It catalyses the reaction D-sedoheptulose 7-phosphate + D-glyceraldehyde 3-phosphate = D-erythrose 4-phosphate + beta-D-fructose 6-phosphate. It functions in the pathway carbohydrate degradation; pentose phosphate pathway; D-glyceraldehyde 3-phosphate and beta-D-fructose 6-phosphate from D-ribose 5-phosphate and D-xylulose 5-phosphate (non-oxidative stage): step 2/3. Functionally, transaldolase is important for the balance of metabolites in the pentose-phosphate pathway. The sequence is that of Probable transaldolase from Thermus thermophilus (strain ATCC BAA-163 / DSM 7039 / HB27).